We begin with the raw amino-acid sequence, 257 residues long: 5'-nucleotidase SurE (257 aa).

Residues Asp-8, Asp-9, Ser-40, and Asn-92 each contribute to the a divalent metal cation site.

The protein belongs to the SurE nucleotidase family. A divalent metal cation serves as cofactor.

The protein localises to the cytoplasm. The enzyme catalyses a ribonucleoside 5'-phosphate + H2O = a ribonucleoside + phosphate. In terms of biological role, nucleotidase that shows phosphatase activity on nucleoside 5'-monophosphates. The protein is 5'-nucleotidase SurE of Rhizobium etli (strain ATCC 51251 / DSM 11541 / JCM 21823 / NBRC 15573 / CFN 42).